We begin with the raw amino-acid sequence, 339 residues long: Undifferentiated embryonic cell transcription factor 1 (339 aa).

Disordered regions lie at residues 1–62 (MLLR…QRTP) and 144–270 (MGLL…QVAP). Residues serine 15, serine 18, serine 48, and serine 54 each carry the phosphoserine modification. Over residues 154–170 (RVRRRSTGPGRPQRRGR) the composition is skewed to basic residues. Composition is skewed to low complexity over residues 171–193 (SSLS…PLAA) and 218–229 (TSSPPLTSTDTL). The segment covering 261–270 (GRASSPQVAP) has biased composition (polar residues). Positions 279–310 (QTLTHLGDISTVLGPLRDQLSTLNQHVEHLRG) are leucine-zipper.

In terms of assembly, binds to the N-terminal region of ATF2. Associates with the TFIID complex through interaction with TBP. Phosphorylated. In terms of tissue distribution, expressed mainly in pluripotent cells with expression rapidly down-regulated upon cell differentiation.

Its subcellular location is the nucleus. In terms of biological role, acts as a transcriptional coactivator of ATF2. This Mus musculus (Mouse) protein is Undifferentiated embryonic cell transcription factor 1.